We begin with the raw amino-acid sequence, 255 residues long: Pyridoxine 5'-phosphate synthase (255 aa).

3-amino-2-oxopropyl phosphate is bound by residues Asn8 and Arg19. His44 functions as the Proton acceptor in the catalytic mechanism. 1-deoxy-D-xylulose 5-phosphate-binding residues include Arg46 and His51. Glu74 serves as the catalytic Proton acceptor. A 1-deoxy-D-xylulose 5-phosphate-binding site is contributed by Thr111. His202 (proton donor) is an active-site residue. 3-amino-2-oxopropyl phosphate contacts are provided by residues Asp203 and 225 to 226; that span reads GH.

Belongs to the PNP synthase family. In terms of assembly, homooctamer; tetramer of dimers.

It is found in the cytoplasm. The catalysed reaction is 3-amino-2-oxopropyl phosphate + 1-deoxy-D-xylulose 5-phosphate = pyridoxine 5'-phosphate + phosphate + 2 H2O + H(+). It functions in the pathway cofactor biosynthesis; pyridoxine 5'-phosphate biosynthesis; pyridoxine 5'-phosphate from D-erythrose 4-phosphate: step 5/5. Functionally, catalyzes the complicated ring closure reaction between the two acyclic compounds 1-deoxy-D-xylulose-5-phosphate (DXP) and 3-amino-2-oxopropyl phosphate (1-amino-acetone-3-phosphate or AAP) to form pyridoxine 5'-phosphate (PNP) and inorganic phosphate. This chain is Pyridoxine 5'-phosphate synthase, found in Xanthomonas oryzae pv. oryzae (strain PXO99A).